Here is a 484-residue protein sequence, read N- to C-terminus: Zinc metalloproteinase/disintegrin PMMP-2 (484 aa).

The signal sequence occupies residues 1 to 20 (MIQVLLVTICLAVFPYQGSS). The propeptide occupies 21 to 190 (IILESGNVDD…KASQLNLTPL (170 aa)). A Peptidase M12B domain is found at 197-395 (RYVKLAIVVD…YNPQCILNAP (199 aa)). An N-linked (GlcNAc...) asparagine glycan is attached at Asn239. Intrachain disulfides connect Cys308–Cys390, Cys352–Cys374, and Cys354–Cys357. His333 is a Zn(2+) binding site. Residue Glu334 is part of the active site. Zn(2+) contacts are provided by His337 and His343. Positions 396-413 (LRTDTVSTPVSGNEFLEA) are excised as a propeptide. Positions 403–484 (TPVSGNEFLE…ADCPRNGLYG (82 aa)) constitute a Disintegrin domain. 6 disulfide bridges follow: Cys417/Cys432, Cys419/Cys427, Cys426/Cys449, Cys440/Cys446, Cys445/Cys470, and Cys458/Cys477. Residues 462–464 (RGD) carry the Cell attachment site motif.

This sequence belongs to the venom metalloproteinase (M12B) family. P-II subfamily. P-IIa sub-subfamily. Monomer. The cofactor is Zn(2+). Expressed by the venom gland.

It is found in the secreted. Its function is as follows. Impairs hemostasis in the envenomed animal. In terms of biological role, inhibits platelet aggregation induced by ADP, thrombin, platelet-activating factor and collagen. Acts by inhibiting fibrinogen interaction with platelet receptors GPIIb/GPIIIa (ITGA2B/ITGB3). The sequence is that of Zinc metalloproteinase/disintegrin PMMP-2 from Protobothrops mucrosquamatus (Taiwan habu).